The chain runs to 161 residues: MLHIRIVAVGKLKEKYLKEGLREYIKRLGAYSRLEIIEVPDEKVPDKPSDTEAALIKRKEGDRLLAAAGDKDYIGVALDPRGEMWSTEDLADKMRRWELYGPNLVVFFIGGTLGLSKEVHAVCKAKWSLSRLTFPHQLVRLILLEQVYRGCKVNRGETYHR.

Residues L78, G110, and 129–134 (LSRLTF) each bind S-adenosyl-L-methionine.

The protein belongs to the RNA methyltransferase RlmH family. Homodimer.

The protein localises to the cytoplasm. The catalysed reaction is pseudouridine(1915) in 23S rRNA + S-adenosyl-L-methionine = N(3)-methylpseudouridine(1915) in 23S rRNA + S-adenosyl-L-homocysteine + H(+). Specifically methylates the pseudouridine at position 1915 (m3Psi1915) in 23S rRNA. This is Ribosomal RNA large subunit methyltransferase H from Heliobacterium modesticaldum (strain ATCC 51547 / Ice1).